The following is a 512-amino-acid chain: Glucagon-like peptide 2 receptor (512 aa).

Residues 1 to 135 (MRRLWGPGTP…KQNVDHYHHT (135 aa)) are Extracellular-facing. Intrachain disulfides connect cysteine 43–cysteine 65, cysteine 56–cysteine 97, and cysteine 78–cysteine 119. An N-linked (GlcNAc...) asparagine glycan is attached at asparagine 73. Residues 136–160 (LLSTLQLMYTVGYSLSLISLFLALT) traverse the membrane as a helical segment. The Cytoplasmic portion of the chain corresponds to 161–172 (LFLFLRKLHCTR). The chain crosses the membrane as a helical span at residues 173–197 (NYIHMNLFASFILRALVVLVKDMVF). Topologically, residues 198–223 (YNSYSRRPDSESGWMSYLSEISASCR) are extracellular. The chain crosses the membrane as a helical span at residues 224–247 (SVQVLLHYFVGTNHLWLLVEGLYL). The Cytoplasmic portion of the chain corresponds to 248–261 (HALLEPTVLPERRL). A helical transmembrane segment spans residues 262-283 (WPKYLVVGWAFPMLFVIPWIFV). Residues 284–301 (RASLENTGCWAVNENKKI) lie on the Extracellular side of the membrane. Residues 302 to 324 (WWIIRGPILLCVTVNFFIFLKIL) traverse the membrane as a helical segment. The Cytoplasmic segment spans residues 325–348 (KLLISKFRAHQMCFRDYKYRLAKS). A helical transmembrane segment spans residues 349 to 367 (TLLLILLMGVHEFLFTFFT). At 368–379 (DDQVQGFSRLIR) the chain is on the extracellular side. The chain crosses the membrane as a helical span at residues 380–400 (LFIQLTLSSFHGFLVALQYGF). Residues 401 to 512 (ASREVKAELR…MEEILEESEI (112 aa)) are Cytoplasmic-facing. The segment at 458-494 (SGVSSHLTAGNLRDHGAQPHRGRGAWPRASSLSESSE) is disordered.

This sequence belongs to the G-protein coupled receptor 2 family.

It localises to the cell membrane. Functionally, this is a receptor for glucagon-like peptide 2. The activity of this receptor is mediated by G proteins which activate adenylyl cyclase. In Mus musculus (Mouse), this protein is Glucagon-like peptide 2 receptor (Glp2r).